The following is a 90-amino-acid chain: DNA/RNA-binding protein Alba (90 aa).

Position 11 is an N6-acetyllysine (lysine 11).

This sequence belongs to the histone-like Alba family. Acetylated. Acetylation at Lys-11 decreases DNA-binding affinity.

The protein localises to the cytoplasm. The protein resides in the chromosome. Binds double-stranded DNA tightly but without sequence specificity. Involved in DNA compaction. This is DNA/RNA-binding protein Alba from Picrophilus torridus (strain ATCC 700027 / DSM 9790 / JCM 10055 / NBRC 100828 / KAW 2/3).